Consider the following 153-residue polypeptide: Ribosomal RNA large subunit methyltransferase H (153 aa).

S-adenosyl-L-methionine is bound by residues leucine 75, glycine 102, and 121–126 (LSPLTM).

The protein belongs to the RNA methyltransferase RlmH family. In terms of assembly, homodimer.

Its subcellular location is the cytoplasm. It catalyses the reaction pseudouridine(1915) in 23S rRNA + S-adenosyl-L-methionine = N(3)-methylpseudouridine(1915) in 23S rRNA + S-adenosyl-L-homocysteine + H(+). Specifically methylates the pseudouridine at position 1915 (m3Psi1915) in 23S rRNA. The chain is Ribosomal RNA large subunit methyltransferase H from Nitratiruptor sp. (strain SB155-2).